The chain runs to 79 residues: Major outer membrane lipoprotein Lpp 2 (79 aa).

The signal sequence occupies residues 1 to 21 (MNRTNQLILGAVVLGSTLLAG). A lipid anchor (N-palmitoyl cysteine) is attached at cysteine 22. Cysteine 22 carries the S-diacylglycerol cysteine lipid modification. 2 consecutive repeats follow at residues 25–35 (NAKIDQLSSDV) and 39–49 (SAKVEQLSNDV). The stretch at 28-69 (IDQLSSDVQTLSAKVEQLSNDVNAMRSDVQAAKDDAARANQR) forms a coiled coil. N6-murein peptidoglycan lysine is present on lysine 79.

Belongs to the Lpp family. As to quaternary structure, homotrimer.

The protein resides in the cell outer membrane. The protein localises to the secreted. It is found in the cell wall. Functionally, plays an important role in virulence. A highly abundant outer membrane lipoprotein that controls the distance between the inner and outer membranes. The only protein known to be covalently linked to the peptidoglycan network (PGN). Also non-covalently binds the PGN. The link between the cell outer membrane and PGN contributes to maintenance of the structural and functional integrity of the cell envelope, and maintains the correct distance between the PGN and the outer membrane. In Salmonella typhimurium (strain LT2 / SGSC1412 / ATCC 700720), this protein is Major outer membrane lipoprotein Lpp 2.